A 122-amino-acid polypeptide reads, in one-letter code: Large ribosomal subunit protein uL18 (122 aa).

This sequence belongs to the universal ribosomal protein uL18 family. Part of the 50S ribosomal subunit; part of the 5S rRNA/L5/L18/L25 subcomplex. Contacts the 5S and 23S rRNAs.

In terms of biological role, this is one of the proteins that bind and probably mediate the attachment of the 5S RNA into the large ribosomal subunit, where it forms part of the central protuberance. This Leptospira interrogans serogroup Icterohaemorrhagiae serovar copenhageni (strain Fiocruz L1-130) protein is Large ribosomal subunit protein uL18.